A 139-amino-acid chain; its full sequence is Large ribosomal subunit protein uL14A (139 aa).

It belongs to the universal ribosomal protein uL14 family. Component of the large ribosomal subunit (LSU). Mature yeast ribosomes consist of a small (40S) and a large (60S) subunit. The 40S small subunit contains 1 molecule of ribosomal RNA (18S rRNA) and at least 33 different proteins. The large 60S subunit contains 3 rRNA molecules (25S, 5.8S and 5S rRNA) and at least 46 different proteins.

It is found in the cytoplasm. Its subcellular location is the nucleus. Component of the ribosome, a large ribonucleoprotein complex responsible for the synthesis of proteins in the cell. The small ribosomal subunit (SSU) binds messenger RNAs (mRNAs) and translates the encoded message by selecting cognate aminoacyl-transfer RNA (tRNA) molecules. The large subunit (LSU) contains the ribosomal catalytic site termed the peptidyl transferase center (PTC), which catalyzes the formation of peptide bonds, thereby polymerizing the amino acids delivered by tRNAs into a polypeptide chain. The nascent polypeptides leave the ribosome through a tunnel in the LSU and interact with protein factors that function in enzymatic processing, targeting, and the membrane insertion of nascent chains at the exit of the ribosomal tunnel. This Schizosaccharomyces pombe (strain 972 / ATCC 24843) (Fission yeast) protein is Large ribosomal subunit protein uL14A (rpl2301).